Here is a 400-residue protein sequence, read N- to C-terminus: S-adenosylmethionine synthase (400 aa).

An ATP-binding site is contributed by Gly-137–Asp-142.

This sequence belongs to the AdoMet synthase 2 family. Mg(2+) serves as cofactor.

It catalyses the reaction L-methionine + ATP + H2O = S-adenosyl-L-methionine + phosphate + diphosphate. It functions in the pathway amino-acid biosynthesis; S-adenosyl-L-methionine biosynthesis; S-adenosyl-L-methionine from L-methionine: step 1/1. Its function is as follows. Catalyzes the formation of S-adenosylmethionine from methionine and ATP. The sequence is that of S-adenosylmethionine synthase from Haloarcula marismortui (strain ATCC 43049 / DSM 3752 / JCM 8966 / VKM B-1809) (Halobacterium marismortui).